Reading from the N-terminus, the 547-residue chain is MNKLIRRAVTIFAVTSVASLFASGVLETSMAESLSTNVISLADTKAKDNTSHKSKKARKNHSKETLVDRKEVAPVHESKATGPKQDSCFGRMYTVKVNDDRNVEITQAVPEYATVGSPYPIEITATGKRDCVDVIITQQLPCEAEFVRSDPATTPTADGKLVWKIDRLGQGEKSKITVWVKPLKEGCCFTAATVCACPEIRSVTKCGQPAICVKQEGPENACLRCPVVYKINVVNQGTAIARNVVVENPVPDGYAHSSGQRVLTFTLGDMQPGEHRTITVEFCPLKRGRATNIATVSYCGGHKNTASVTTVINEPCVQVSIAGADWSYVCKPVEYVISVSNPGDLVLRDVVVEDTLSPGVTVLEAAGAQISCNKVVWTVKELNPGESLQYKVLVRAQTPGQFTNNVVVKSCSDCGTCTSCAEATTYWKGVAATHMCVVDTCDPVCVGENTVYRICVTNRGSAEDTNVSLMLKFSKELQPVSFSGPTKGTITGNTVVFDSLPRLGSKETVEFSVTLKAVSAGDARGEAILSSDTLTVPVSDTENTHIY.

The signal sequence occupies residues 1–22; the sequence is MNKLIRRAVTIFAVTSVASLFA. Positions 23-40 are excised as a propeptide; it reads SGVLETSMAESLSTNVIS. A disordered region spans residues 46–83; it reads AKDNTSHKSKKARKNHSKETLVDRKEVAPVHESKATGP. The span at 52–61 shows a compositional bias: basic residues; that stretch reads HKSKKARKNH. Over residues 62-79 the composition is skewed to basic and acidic residues; it reads SKETLVDRKEVAPVHESK.

Part of a disulfide cross-linked outer membrane complex (COMC) composed of the major outer membrane porin (MOMP), the small cysteine-rich protein (OmcA) and the large cysteine-rich periplasmic protein (OmcB).

It is found in the periplasm. Its function is as follows. In elementary bodies (EBs, the infectious stage, which is able to survive outside the host cell) provides the structural integrity of the outer envelope through disulfide cross-links with the small cysteine-rich protein and the major outer membrane protein. It has been described in publications as the Sarkosyl-insoluble COMC (Chlamydia outer membrane complex), and serves as the functional equivalent of peptidoglycan. The sequence is that of Large cysteine-rich periplasmic protein OmcB, serovar E (omcB) from Chlamydia trachomatis.